A 435-amino-acid chain; its full sequence is Monodehydroascorbate reductase 2 (435 aa).

Residues 14–17, E41, R48, K53, I96, and 147–148 each bind FAD; these read GGVA and RE. NAD(+)-binding positions include 172–178, E196, R202, and G261; that span reads GGYIGLE. 174–178 is a binding site for NADP(+); it reads YIGLE. NADP(+) is bound by residues R202 and G261. D298 contacts FAD. An NAD(+)-binding site is contributed by 314–315; it reads EH. 314 to 315 lines the NADP(+) pocket; sequence EH. Residue V316 participates in FAD binding. R320 contacts L-ascorbate. FAD is bound at residue Y349. Position 349 (Y349) interacts with NAD(+). Residue Y349 participates in NADP(+) binding. R351 contacts L-ascorbate. At S417 the chain carries Phosphoserine.

This sequence belongs to the FAD-dependent oxidoreductase family. FAD serves as cofactor.

The protein localises to the cytoplasm. The enzyme catalyses 2 monodehydro-L-ascorbate radical + NADH + H(+) = 2 L-ascorbate + NAD(+). Functionally, catalyzes the conversion of monodehydroascorbate to ascorbate, oxidizing NADH in the process. The protein is Monodehydroascorbate reductase 2 of Arabidopsis thaliana (Mouse-ear cress).